The sequence spans 462 residues: Lipase A (462 aa).

A signal peptide spans 1-21 (MRVSLRSITSLLAAATAAVLA). A disulfide bridge links Cys122 with Cys294. Residues Ser205, Asp355, and His387 each act as charge relay system in the active site. Cysteines 371 and 415 form a disulfide.

This sequence belongs to the AB hydrolase superfamily. Lipase family. Monomer.

The protein resides in the secreted. It carries out the reaction a triacylglycerol + H2O = a diacylglycerol + a fatty acid + H(+). Its function is as follows. Hydrolyzes triglycerides, with a preference for substrates with short-chain lengths (C4 to C8). Has the highest activity with tributyrin (C4), followed by tricaproin (C6) and tricaprylin (C8). Can also hydrolyze vinylacetate (C2) and triolein (C18), but with lower efficiency. Has no activity with tripalmitin (C16). This Moesziomyces aphidis (Pseudozyma aphidis) protein is Lipase A.